The following is a 222-amino-acid chain: Thymidylate kinase (222 aa).

ATP contacts are provided by residues 29–34 (RVGKST) and R111. Residues 146 to 170 (LSMSSEDATKRGEYGGERYEKLEFQ) are LID.

This sequence belongs to the thymidylate kinase family. In terms of assembly, homodimer. The cofactor is Mg(2+).

It catalyses the reaction dTMP + ATP = dTDP + ADP. It participates in pyrimidine metabolism; dTTP biosynthesis. In terms of biological role, catalyzes the phosphorylation of thymidine monophosphate (dTMP) to thymidine diphosphate (dTDP), the immediate precursor for the DNA building block dTTP, with ATP as the preferred phosphoryl donor in the presence of Mg(2+). This Dictyostelium discoideum (Social amoeba) protein is Thymidylate kinase (dtymk).